The sequence spans 185 residues: Elongation factor P (185 aa).

It belongs to the elongation factor P family.

The protein localises to the cytoplasm. It participates in protein biosynthesis; polypeptide chain elongation. Its function is as follows. Involved in peptide bond synthesis. Stimulates efficient translation and peptide-bond synthesis on native or reconstituted 70S ribosomes in vitro. Probably functions indirectly by altering the affinity of the ribosome for aminoacyl-tRNA, thus increasing their reactivity as acceptors for peptidyl transferase. The polypeptide is Elongation factor P (Burkholderia multivorans (strain ATCC 17616 / 249)).